We begin with the raw amino-acid sequence, 1061 residues long: Lysine-specific demethylase jmjd-3.1 (1061 aa).

Disordered stretches follow at residues 30 to 49 (VKNS…MRPV) and 256 to 417 (KSLS…KRRT). A compositionally biased stretch (polar residues) spans 271–287 (QHTNSVGSSIGTTSGDS). The segment covering 310-320 (STSSEFTETTS) has biased composition (low complexity). The span at 321–330 (VANQTESNAG) shows a compositional bias: polar residues. The required for nuclear localization stretch occupies residues 369 to 417 (KKKEQSATEPPIPRTKRAYTKNPNTIRKRRMKKNQSDDEEDDGPPKRRT). The segment at 418–759 (INYQIEFRDA…FGTNIDLLSE (342 aa)) is required for binding of unc-3 and for function in Y-to-PDA transdifferentiation. Residues 760-923 (NFKKQMNEIE…LATSIVAHDH (164 aa)) enclose the JmjC domain. Residues His-811, Glu-813, and His-891 each coordinate Fe cation. Zn(2+) is bound by residues Cys-998, Cys-1001, Cys-1025, and Cys-1028.

This sequence belongs to the UTX family. In terms of assembly, interacts with wdr-5.1 and unc-3. The cofactor is Fe(2+). As to expression, mainly expressed in head and tail.

It localises to the nucleus. Its function is as follows. Histone demethylase that specifically demethylates trimethylated 'Lys-27' of histone H3, a mark associated with transcriptional repression, thereby playing a central role in the histone code. Involved in the transcriptional regulation of the heat shock response, unfolded protein response and possibly other stress response target genes. Required for gonad development and organization. Required for the robust transdifferentiation of the Y rectal epithelial cell to the PDA motor neuron during larval development. Acts cell-autonomously in Y-to-PDA transdifferentiation, which depends on the demethylase activity and on recognition of the H3 tail. Cooperates with set-2 and unc-3 to ensure robust Y-to-PDA transdifferentiation. Promotes mitochondrial stress-induced longevity. Involved in lifespan regulation. The chain is Lysine-specific demethylase jmjd-3.1 from Caenorhabditis elegans.